The sequence spans 395 residues: Thyrotropin-releasing hormone receptor (395 aa).

The Extracellular portion of the chain corresponds to 1 to 30 (MENGTGDEQNHTGLLLSSQEFVTAEYQVVT). 2 N-linked (GlcNAc...) asparagine glycosylation sites follow: N3 and N10. A helical transmembrane segment spans residues 31–53 (ILLVLLICGLGIVGNIMVVLVVL). At 54 to 63 (RTKHMRTPTN) the chain is on the cytoplasmic side. The helical transmembrane segment at 64-85 (CYLVSLAVADLMVLVAAGLPNI) threads the bilayer. Topologically, residues 86-101 (TESLYKSWVYGYVGCL) are extracellular. C100 and C181 are joined by a disulfide. The chain crosses the membrane as a helical span at residues 102-123 (CITYLQYLGINASSFSITAFTI). Topologically, residues 124-146 (ERYIAICHPIKAQFLCTFSRAKK) are cytoplasmic. Residues 147 to 170 (IIIFVWSFASVYCMLWFFLLDLNI) traverse the membrane as a helical segment. Topologically, residues 171–195 (AVYKDTTVVSCGYKVSRSYYSPIYM) are extracellular. The helical transmembrane segment at 196 to 217 (MDFGIFYVLPMVLATVLYGLIA) threads the bilayer. The Cytoplasmic segment spans residues 218–268 (RILFLNPIPSDPKENSNTWKNDMAQQNKTVNSKMTNKSFNSTIASRRQVTK). The helical transmembrane segment at 269–290 (MLAVVVVLFAFLWMPYRTLVVV) threads the bilayer. Topologically, residues 291 to 298 (NSFLSSPF) are extracellular. A helical membrane pass occupies residues 299 to 321 (QENWFLLFCRICIYLNSAINPVI). Residues 322–395 (YNLMSQKFRA…IGDTCLSSEA (74 aa)) lie on the Cytoplasmic side of the membrane.

Belongs to the G-protein coupled receptor 1 family.

It localises to the cell membrane. Functionally, receptor for thyrotropin-releasing hormone (TRH). Upon ligand binding, this G-protein-coupled receptor triggers activation of the phosphatidylinositol (IP3)-calcium-protein kinase C (PKC) pathway. In Gallus gallus (Chicken), this protein is Thyrotropin-releasing hormone receptor (TRHR).